A 382-amino-acid polypeptide reads, in one-letter code: Alkanesulfonate monooxygenase (382 aa).

This sequence belongs to the SsuD family.

The catalysed reaction is an alkanesulfonate + FMNH2 + O2 = an aldehyde + FMN + sulfite + H2O + 2 H(+). Catalyzes the desulfonation of aliphatic sulfonates. The protein is Alkanesulfonate monooxygenase of Pseudomonas putida (strain ATCC 47054 / DSM 6125 / CFBP 8728 / NCIMB 11950 / KT2440).